Reading from the N-terminus, the 362-residue chain is UDP-N-acetylglucosamine--N-acetylmuramyl-(pentapeptide) pyrophosphoryl-undecaprenol N-acetylglucosamine transferase (362 aa).

UDP-N-acetyl-alpha-D-glucosamine is bound by residues 14–16, Arg-170, Ser-199, and Gln-289; that span reads TGG.

It belongs to the glycosyltransferase 28 family. MurG subfamily.

The protein resides in the cell inner membrane. It carries out the reaction di-trans,octa-cis-undecaprenyl diphospho-N-acetyl-alpha-D-muramoyl-L-alanyl-D-glutamyl-meso-2,6-diaminopimeloyl-D-alanyl-D-alanine + UDP-N-acetyl-alpha-D-glucosamine = di-trans,octa-cis-undecaprenyl diphospho-[N-acetyl-alpha-D-glucosaminyl-(1-&gt;4)]-N-acetyl-alpha-D-muramoyl-L-alanyl-D-glutamyl-meso-2,6-diaminopimeloyl-D-alanyl-D-alanine + UDP + H(+). It functions in the pathway cell wall biogenesis; peptidoglycan biosynthesis. Its function is as follows. Cell wall formation. Catalyzes the transfer of a GlcNAc subunit on undecaprenyl-pyrophosphoryl-MurNAc-pentapeptide (lipid intermediate I) to form undecaprenyl-pyrophosphoryl-MurNAc-(pentapeptide)GlcNAc (lipid intermediate II). This Borrelia turicatae (strain 91E135) protein is UDP-N-acetylglucosamine--N-acetylmuramyl-(pentapeptide) pyrophosphoryl-undecaprenol N-acetylglucosamine transferase.